Reading from the N-terminus, the 565-residue chain is Zinc finger protein 512 (565 aa).

The interval 1 to 30 is disordered; sequence MSSRLGAVPATSGPTTFKQQRSTRIVGAKN. Over residues 12-23 the composition is skewed to polar residues; the sequence is SGPTTFKQQRST. Glycyl lysine isopeptide (Lys-Gly) (interchain with G-Cter in SUMO2) cross-links involve residues K18 and K83. Residues 85–147 form a disordered region; sequence AATSHVEGSG…QARRIRKEPP (63 aa). Residues 118 to 129 are compositionally biased toward basic residues; it reads KKHKLYGRKQRP. The C2H2-type 1 zinc finger occupies 196-219; it reads FTCHHCGKQLRSLAGMKYHVMANH. A Glycyl lysine isopeptide (Lys-Gly) (interchain with G-Cter in SUMO2) cross-link involves residue K226. A C2H2-type 2 zinc finger spans residues 286–309; the sequence is LKCHHCGKPYRSKAGLAYHLRSEH. Residue K332 forms a Glycyl lysine isopeptide (Lys-Gly) (interchain with G-Cter in SUMO2) linkage. Residues 405-429 form a C2H2-type 3; atypical zinc finger; the sequence is IQCPNQGCEAVYSSVSGLKAHLGSC. The C2H2-type 4 zinc finger occupies 439–462; the sequence is YKCLLCQKEFVSESGVKYHINSVH. Positions 484–493 are enriched in basic and acidic residues; sequence KQRQQEEEKR. Residues 484-565 form a disordered region; that stretch reads KQRQQEEEKR…PKTNHKRGRK (82 aa). Residues 494 to 507 show a composition bias toward basic residues; it reads RQQHRSRRSLRRRQ. Residues 522-531 are compositionally biased toward basic and acidic residues; it reads VGKDQRRNEE. Residues 554 to 565 show a composition bias toward basic residues; the sequence is KPPKTNHKRGRK.

It belongs to the krueppel C2H2-type zinc-finger protein family.

It localises to the nucleus. In terms of biological role, may be involved in transcriptional regulation. The polypeptide is Zinc finger protein 512 (ZNF512) (Macaca fascicularis (Crab-eating macaque)).